We begin with the raw amino-acid sequence, 317 residues long: Actin-related protein 2/3 complex subunit 2 (317 aa).

This sequence belongs to the ARPC2 family. As to quaternary structure, component of the Arp2/3 complex composed of arp2, act2, arc1/p41-ARC, arc2/p34-ARC, arc3/p21-ARC, arc4/p20-ARC and arc5/p16-ARC.

It localises to the cytoplasm. The protein resides in the cytoskeleton. The protein localises to the actin patch. Its function is as follows. Functions as actin-binding component of the Arp2/3 complex which is involved in regulation of actin polymerization and together with an activating nucleation-promoting factor (NPF) mediates the formation of branched actin networks. Seems to contact the mother actin filament. The polypeptide is Actin-related protein 2/3 complex subunit 2 (arc2) (Schizosaccharomyces pombe (strain 972 / ATCC 24843) (Fission yeast)).